The sequence spans 122 residues: Large ribosomal subunit protein uL14 (122 aa).

Belongs to the universal ribosomal protein uL14 family. In terms of assembly, part of the 50S ribosomal subunit. Forms a cluster with proteins L3 and L19. In the 70S ribosome, L14 and L19 interact and together make contacts with the 16S rRNA in bridges B5 and B8.

Binds to 23S rRNA. Forms part of two intersubunit bridges in the 70S ribosome. This is Large ribosomal subunit protein uL14 from Rickettsia bellii (strain OSU 85-389).